We begin with the raw amino-acid sequence, 723 residues long: Polyribonucleotide nucleotidyltransferase (723 aa).

Mg(2+)-binding residues include Asp488 and Asp494. In terms of domain architecture, KH spans Pro555 to Ile614. Residues Gly624 to Lys692 form the S1 motif domain. The interval Ser701–Gln723 is disordered. Over residues Ala707 to Gln723 the composition is skewed to low complexity.

It belongs to the polyribonucleotide nucleotidyltransferase family. Requires Mg(2+) as cofactor.

The protein localises to the cytoplasm. The enzyme catalyses RNA(n+1) + phosphate = RNA(n) + a ribonucleoside 5'-diphosphate. Involved in mRNA degradation. Catalyzes the phosphorolysis of single-stranded polyribonucleotides processively in the 3'- to 5'-direction. In Cupriavidus taiwanensis (strain DSM 17343 / BCRC 17206 / CCUG 44338 / CIP 107171 / LMG 19424 / R1) (Ralstonia taiwanensis (strain LMG 19424)), this protein is Polyribonucleotide nucleotidyltransferase.